The chain runs to 307 residues: Ribonuclease Z (307 aa).

The Zn(2+) site is built by histidine 63, histidine 65, aspartate 67, histidine 68, histidine 143, aspartate 213, and histidine 271. The active-site Proton acceptor is the aspartate 67.

This sequence belongs to the RNase Z family. In terms of assembly, homodimer. It depends on Zn(2+) as a cofactor.

The catalysed reaction is Endonucleolytic cleavage of RNA, removing extra 3' nucleotides from tRNA precursor, generating 3' termini of tRNAs. A 3'-hydroxy group is left at the tRNA terminus and a 5'-phosphoryl group is left at the trailer molecule.. In terms of biological role, zinc phosphodiesterase, which displays some tRNA 3'-processing endonuclease activity. Probably involved in tRNA maturation, by removing a 3'-trailer from precursor tRNA. The sequence is that of Ribonuclease Z from Lactococcus lactis subsp. lactis (strain IL1403) (Streptococcus lactis).